The following is a 471-amino-acid chain: MKIKTRFAPSPTGYLHVGGARTALYSWLFSRHLGGEFVLRIEDTDLERSTQEAIDAIMDGMNWLNLDWDEGPYFQTKRFDRYNAVIDQMLDAGTAYRCYCSKERLEALREAQMANGEKPRYDGHCRDSQCTHGADEPSVVRFRNPQEGSVIFDDKIRGPIEFSNQELDDLIIRRTDGSPTYNFCVVIDDWDMEITHVIRGEDHINNTPRQINILKALGAPVPEYAHVSMILGDDGKKLSKRHGAVGVMQYRDDGYLPEALLNYLVRLGWSHGDQEIFSIEEMTQLFTLDAVSKSASAFNTEKLQWLNHHYINSLPPEQVAVHLSWHVEQLGIDTRNGPELVEIVKLLGERCKTLKEMAESCRYFYEEFDAFDVDAAKKHLRPIARQPLEAVKVKLAAITEWTTENVHNAIQGTADELGVGMGKVGMPLRVAVTGVGQSPGMDVTVHAIGQARTLARIDKALAFISEREAQQ.

Positions 9–19 (PSPTGYLHVGG) match the 'HIGH' region motif. Zn(2+) is bound by residues C98, C100, C125, and D127. The 'KMSKS' region motif lies at 237 to 241 (KLSKR). K240 is an ATP binding site.

Belongs to the class-I aminoacyl-tRNA synthetase family. Glutamate--tRNA ligase type 1 subfamily. Monomer. Zn(2+) is required as a cofactor.

It localises to the cytoplasm. It carries out the reaction tRNA(Glu) + L-glutamate + ATP = L-glutamyl-tRNA(Glu) + AMP + diphosphate. Its function is as follows. Catalyzes the attachment of glutamate to tRNA(Glu) in a two-step reaction: glutamate is first activated by ATP to form Glu-AMP and then transferred to the acceptor end of tRNA(Glu). The chain is Glutamate--tRNA ligase from Yersinia pseudotuberculosis serotype IB (strain PB1/+).